The sequence spans 398 residues: 1-deoxy-D-xylulose 5-phosphate reductoisomerase (398 aa).

Residues Thr-10, Gly-11, Ser-12, Ile-13, Gly-36, Arg-37, Asn-38, and Asn-124 each contribute to the NADPH site. Lys-125 is a binding site for 1-deoxy-D-xylulose 5-phosphate. Position 126 (Glu-126) interacts with NADPH. Asp-150 lines the Mn(2+) pocket. 4 residues coordinate 1-deoxy-D-xylulose 5-phosphate: Ser-151, Glu-152, Ser-186, and His-209. Position 152 (Glu-152) interacts with Mn(2+). Gly-215 contributes to the NADPH binding site. Positions 222, 227, 228, and 231 each coordinate 1-deoxy-D-xylulose 5-phosphate. Glu-231 is a binding site for Mn(2+).

The protein belongs to the DXR family. As to quaternary structure, homodimer. The cofactor is Mg(2+). Mn(2+) is required as a cofactor.

It catalyses the reaction 2-C-methyl-D-erythritol 4-phosphate + NADP(+) = 1-deoxy-D-xylulose 5-phosphate + NADPH + H(+). It participates in isoprenoid biosynthesis; isopentenyl diphosphate biosynthesis via DXP pathway; isopentenyl diphosphate from 1-deoxy-D-xylulose 5-phosphate: step 1/6. Functionally, catalyzes the NADPH-dependent rearrangement and reduction of 1-deoxy-D-xylulose-5-phosphate (DXP) to 2-C-methyl-D-erythritol 4-phosphate (MEP). This Yersinia enterocolitica serotype O:8 / biotype 1B (strain NCTC 13174 / 8081) protein is 1-deoxy-D-xylulose 5-phosphate reductoisomerase.